Consider the following 319-residue polypeptide: MKRIGVLTSGGDSPGMNAAIRAVVRKAIYHDIEVYGIYHGYAGLISGHIEKLELGSVGDIIHRGGTKLYTARCPEFKDPAVREKGIEQLKKHGIEGLVVIGGDGSYQGAKKLTEQGFPCVGVPGTIDNDIPGTDFTIGFDTALNTVIDAIDKIRDTATSHERTYVIEVMGRHAGDIALWAGLADGAETILIPEAEYDMDDVIARLKRGSERGKKHSIIVVAEGVGSAIDIGKKIEEATNFDTRVTVLGHVQRGGSPSAQDRVLASRLGARAVELLMEGKGGRCVGIQNNKLVDHDIIEALAQKHVIDIDMYQLSKELSI.

Residue G11 participates in ATP binding. 21 to 25 (RAVVR) lines the ADP pocket. Residues 72-73 (RC) and 102-105 (GDGS) contribute to the ATP site. D103 contributes to the Mg(2+) binding site. 125–127 (TID) lines the substrate pocket. The Proton acceptor role is filled by D127. ADP is bound at residue R154. Substrate contacts are provided by residues R162 and 169 to 171 (MGR). Residues 185–187 (GAE), R211, and 213–215 (KKH) each bind ADP. Residues E222, R243, and 249–252 (HVQR) each bind substrate.

This sequence belongs to the phosphofructokinase type A (PFKA) family. ATP-dependent PFK group I subfamily. Prokaryotic clade 'B1' sub-subfamily. Homotetramer. Mg(2+) serves as cofactor.

It localises to the cytoplasm. The enzyme catalyses beta-D-fructose 6-phosphate + ATP = beta-D-fructose 1,6-bisphosphate + ADP + H(+). It participates in carbohydrate degradation; glycolysis; D-glyceraldehyde 3-phosphate and glycerone phosphate from D-glucose: step 3/4. Its activity is regulated as follows. Allosterically activated by ADP and other diphosphonucleosides, and allosterically inhibited by phosphoenolpyruvate. Functionally, catalyzes the phosphorylation of D-fructose 6-phosphate to fructose 1,6-bisphosphate by ATP, the first committing step of glycolysis. The sequence is that of ATP-dependent 6-phosphofructokinase from Bacillus cytotoxicus (strain DSM 22905 / CIP 110041 / 391-98 / NVH 391-98).